A 64-amino-acid chain; its full sequence is Large ribosomal subunit protein uL29 (64 aa).

The protein belongs to the universal ribosomal protein uL29 family.

The protein is Large ribosomal subunit protein uL29 of Acaryochloris marina (strain MBIC 11017).